Here is a 234-residue protein sequence, read N- to C-terminus: MSLPIIKVHWLDHSRAFRLLWLLDHLNLEYEIVPYKRDANFRAPPELKKIHPLGRSPLLEVQDRETGKKKILAESGFIFQYVLQHFDHSHVLMSEDADIADQINYYLFYVEGSLQPPLMIEFILSKVKDSGMPFPISYLARKVADKISQAYSSGEVKNQFDFVEGEISKNNGYLVDGKLSGADILMSFPLQMAFERKFAAPEDYPAISKWLKTITSEESYAASKEKARALGSNF.

The region spanning 3–90 (LPIIKVHWLD…YVLQHFDHSH (88 aa)) is the GST N-terminal domain. A GST C-terminal domain is found at 96–234 (DADIADQINY…EKARALGSNF (139 aa)).

This sequence belongs to the GST superfamily. In terms of assembly, homodimer.

It is found in the endoplasmic reticulum membrane. It catalyses the reaction RX + glutathione = an S-substituted glutathione + a halide anion + H(+). This Saccharomyces cerevisiae (strain ATCC 204508 / S288c) (Baker's yeast) protein is Glutathione S-transferase 1 (GTT1).